The following is a 263-amino-acid chain: MDWGALQTILGGVNKHSTSIGKIWLTVLFIFRIMILVVAAERVWGDEQDDFICNTLQPGCKNVCYDHFFPISHIRLWALQLIFVSTPALLVAMHVAYRRHEKKRQFRKGDQKCEYKDIEEIRTQRFRIEGTLWWTYTCSIFFRLVFEAVFMYAFYFMYDGFRMPRLMKCSAWPCPNTVDCFVSRPTEKTVFTIFMIAVSSICILLNVAELCYLLTKFFLRRSRKAGNQKHHPNHENKEETKQNEMNELISDSCQNTVIGFTSS.

Topologically, residues 1 to 19 (MDWGALQTILGGVNKHSTS) are cytoplasmic. Residues 20–40 (IGKIWLTVLFIFRIMILVVAA) traverse the membrane as a helical segment. Residues 41 to 75 (ERVWGDEQDDFICNTLQPGCKNVCYDHFFPISHIR) lie on the Extracellular side of the membrane. Residues 76-96 (LWALQLIFVSTPALLVAMHVA) traverse the membrane as a helical segment. Residues 97 to 137 (YRRHEKKRQFRKGDQKCEYKDIEEIRTQRFRIEGTLWWTYT) lie on the Cytoplasmic side of the membrane. A helical transmembrane segment spans residues 138-158 (CSIFFRLVFEAVFMYAFYFMY). Over 159–189 (DGFRMPRLMKCSAWPCPNTVDCFVSRPTEKT) the chain is Extracellular. A helical membrane pass occupies residues 190 to 210 (VFTIFMIAVSSICILLNVAEL). The Cytoplasmic segment spans residues 211 to 263 (CYLLTKFFLRRSRKAGNQKHHPNHENKEETKQNEMNELISDSCQNTVIGFTSS).

It belongs to the connexin family. Beta-type (group I) subfamily. In terms of assembly, a connexon is composed of a hexamer of connexins. In terms of tissue distribution, exclusively expressed in the cochlea of the inner ear, where it is found in cells of the tegmentum vasculosum, cuboidal cells, supporting cells and clear cells.

It localises to the cell membrane. The protein resides in the cell junction. Its subcellular location is the gap junction. One gap junction consists of a cluster of closely packed pairs of transmembrane channels, the connexons, through which materials of low MW diffuse from one cell to a neighboring cell. This is Gap junction beta-6 protein (GJB6) from Gallus gallus (Chicken).